Here is a 790-residue protein sequence, read N- to C-terminus: Probable quinate dehydrogenase (quinone) (790 aa).

Helical transmembrane passes span 22-42 (GSWYFLLMGLATALAGVLIVL), 48-68 (ALVYGVAFALTLVWALWDAGL), 77-94 (LMLPAAFAVLVALAWPAL), and 106-126 (AYGVATVLALAVVAGIGGMFV). The disordered stretch occupies residues 171 to 200 (RSNGRPAAGSPGPTTPGEIANSDGNGAEDQ). Residues 174–187 (GRPAAGSPGPTTPG) show a composition bias toward low complexity.

Belongs to the bacterial PQQ dehydrogenase family. It depends on pyrroloquinoline quinone as a cofactor.

The protein localises to the cell membrane. The enzyme catalyses L-quinate + a quinone = 3-dehydroquinate + a quinol. Its pathway is aromatic compound metabolism; 3,4-dihydroxybenzoate biosynthesis; 3-dehydroquinate from D-quinate (PQQ route): step 1/1. The polypeptide is Probable quinate dehydrogenase (quinone) (qumA) (Xanthomonas campestris pv. juglandis (Xanthomonas arboricola pv. juglandis)).